A 149-amino-acid chain; its full sequence is uncharacterized protein (149 aa).

This is an uncharacterized protein from Acidithiobacillus ferridurans.